A 441-amino-acid polypeptide reads, in one-letter code: ATP-dependent protease ATPase subunit HslU (441 aa).

Residues V18, 60–65, D254, E319, and R391 each bind ATP; that span reads GVGKTE.

It belongs to the ClpX chaperone family. HslU subfamily. A double ring-shaped homohexamer of HslV is capped on each side by a ring-shaped HslU homohexamer. The assembly of the HslU/HslV complex is dependent on binding of ATP.

It is found in the cytoplasm. In terms of biological role, ATPase subunit of a proteasome-like degradation complex; this subunit has chaperone activity. The binding of ATP and its subsequent hydrolysis by HslU are essential for unfolding of protein substrates subsequently hydrolyzed by HslV. HslU recognizes the N-terminal part of its protein substrates and unfolds these before they are guided to HslV for hydrolysis. The polypeptide is ATP-dependent protease ATPase subunit HslU (Verminephrobacter eiseniae (strain EF01-2)).